Here is a 166-residue protein sequence, read N- to C-terminus: NADPH-dependent 7-cyano-7-deazaguanine reductase (166 aa).

The active-site Thioimide intermediate is the Cys-57. Catalysis depends on Asp-64, which acts as the Proton donor. Substrate contacts are provided by residues 79 to 81 and 98 to 99; these read VES and HE.

This sequence belongs to the GTP cyclohydrolase I family. QueF type 1 subfamily.

The protein localises to the cytoplasm. The catalysed reaction is 7-aminomethyl-7-carbaguanine + 2 NADP(+) = 7-cyano-7-deazaguanine + 2 NADPH + 3 H(+). It participates in tRNA modification; tRNA-queuosine biosynthesis. In terms of biological role, catalyzes the NADPH-dependent reduction of 7-cyano-7-deazaguanine (preQ0) to 7-aminomethyl-7-deazaguanine (preQ1). This is NADPH-dependent 7-cyano-7-deazaguanine reductase from Staphylococcus aureus (strain MRSA252).